The primary structure comprises 168 residues: MLVYQDLLTGDELLSDSFPYKEVENGVLWEVQGKWVVQGAVDVNIGANPSAEGGCEDEGVDDQAVRVVDIVDTFRLQEQPAFDKKQFVTFMKRYIKNLTPKLEGETQEAFKKNIEAATKFLLQKIKDLQFFVGESMHDDGALVFAYYKEGSADPPFLYIAPGLKEIKC.

Positions 1–168 (MLVYQDLLTG…IAPGLKEIKC (168 aa)) constitute a TCTP domain.

It belongs to the TCTP family.

It localises to the cytoplasm. Involved in calcium binding and microtubule stabilization. In Solanum lycopersicum (Tomato), this protein is Translationally-controlled tumor protein homolog (TCTP).